The chain runs to 609 residues: UvrABC system protein C (609 aa).

The 78-residue stretch at 15–92 folds into the GIY-YIG domain; sequence TGSGVYQMQD…IKQFRPRYNV (78 aa). In terms of domain architecture, UVR spans 202–237; it reads DQVIIKLTERMEVTSENLVFEEAAHYRDQIRQLRRL.

The protein belongs to the UvrC family. As to quaternary structure, interacts with UvrB in an incision complex.

The protein resides in the cytoplasm. Its function is as follows. The UvrABC repair system catalyzes the recognition and processing of DNA lesions. UvrC both incises the 5' and 3' sides of the lesion. The N-terminal half is responsible for the 3' incision and the C-terminal half is responsible for the 5' incision. The chain is UvrABC system protein C from Coxiella burnetii (strain RSA 493 / Nine Mile phase I).